The chain runs to 89 residues: Elongation factor 1-beta (89 aa).

This sequence belongs to the EF-1-beta/EF-1-delta family.

Functionally, promotes the exchange of GDP for GTP in EF-1-alpha/GDP, thus allowing the regeneration of EF-1-alpha/GTP that could then be used to form the ternary complex EF-1-alpha/GTP/AAtRNA. This is Elongation factor 1-beta from Methanococcus maripaludis (strain C7 / ATCC BAA-1331).